The sequence spans 359 residues: Alanine racemase, biosynthetic (359 aa).

The Proton acceptor; specific for D-alanine role is filled by K34. An N6-(pyridoxal phosphate)lysine modification is found at K34. R129 contributes to the substrate binding site. The Proton acceptor; specific for L-alanine role is filled by Y255. Position 303 (M303) interacts with substrate.

Belongs to the alanine racemase family. In terms of assembly, monomer but homodimer in the presence of the substrate. The cofactor is pyridoxal 5'-phosphate.

It carries out the reaction L-alanine = D-alanine. Its pathway is amino-acid biosynthesis; D-alanine biosynthesis; D-alanine from L-alanine: step 1/1. It functions in the pathway cell wall biogenesis; peptidoglycan biosynthesis. Functionally, catalyzes the interconversion of L-alanine and D-alanine. The protein is Alanine racemase, biosynthetic (alr) of Shigella dysenteriae.